A 181-amino-acid polypeptide reads, in one-letter code: Probable N-acetyltransferase YjcK (181 aa).

Positions 7–172 constitute an N-acetyltransferase domain; that stretch reads IYVRPLEVTD…NGVWEDHQVL (166 aa).

Belongs to the acetyltransferase family. RimJ subfamily.

It carries out the reaction an N-terminal L-alpha-aminoacyl-[protein] + acetyl-CoA = N-terminal N(alpha)-acetyl-L-alpha-aminoacyl-[protein] + CoA + H(+). Functionally, probable N-terminal protein acetyltransferase. This chain is Probable N-acetyltransferase YjcK (yjcK), found in Bacillus subtilis (strain 168).